We begin with the raw amino-acid sequence, 1873 residues long: Ankyrin repeat domain-containing protein 31 (1873 aa).

Disordered stretches follow at residues 1–27 (MEEG…SDLE) and 361–380 (EPLS…DQET). Polar residues predominate over residues 361–379 (EPLSNKRNSNSVTNSSDQE). 3 ANK repeats span residues 488 to 517 (FGEN…NVNQ), 521 to 550 (AGWT…DVNI), and 554 to 583 (YQIT…DPLF). The disordered stretch occupies residues 707-740 (TGLRKGNLHNVKDPNTNVPKGIGRRKTQHKRTQV). The span at 728 to 737 (IGRRKTQHKR) shows a compositional bias: basic residues. 3 ANK repeats span residues 1154-1183 (RGES…DVNL), 1187-1216 (AGWT…KVNC), and 1220-1249 (DGIL…NPNQ). Disordered stretches follow at residues 1242–1263 (QNGA…EADD), 1449–1482 (RSEI…SGSM), 1512–1549 (FSGN…PSQP), and 1606–1634 (CDQD…ASES). A compositionally biased stretch (basic and acidic residues) spans 1250 to 1263 (KDQKQKSALDEADD). Composition is skewed to polar residues over residues 1460–1482 (ELTS…SGSM) and 1515–1525 (NDMNSKQNGSD). The segment covering 1535–1544 (RHSDGTEKNK) has biased composition (basic and acidic residues). Residues 1621-1632 (KTSSQQSPTGAS) show a composition bias toward polar residues. The region spanning 1683–1778 (KKALNYSTAP…TYLGKELLRY (96 aa)) is the RAMA domain.

Interacts with REC114; the interaction is direct. Interacts with IHO1.

Its subcellular location is the nucleus. It localises to the chromosome. Functionally, required for DNA double-strand breaks (DSBs) formation during meiotic recombination. Regulates the spatial and temporal patterns of pre-DSB recombinosome assembly and recombination activity by acting as a scaffold that anchors REC114 and other factors to specific genomic locations, thereby regulating DSB formation. Plays a key role in recombination in the pseudoautosomal regions of sex chromosomes. The sequence is that of Ankyrin repeat domain-containing protein 31 from Homo sapiens (Human).